A 108-amino-acid chain; its full sequence is Peptidyl-prolyl cis-trans isomerase FKBP1A (108 aa).

The PPIase FKBP-type domain occupies 20–108; the sequence is GQTCVVHYTG…IFDVELLKLE (89 aa). The residue at position 53 (K53) is an N6-acetyllysine; alternate. An N6-succinyllysine; alternate modification is found at K53.

Belongs to the FKBP-type PPIase family. FKBP1 subfamily. As to quaternary structure, interacts with TGFBR1; prevents TGFBR1 phosphorylation by TGFBR2 and stabilizes it in the inactive conformation. Interacts with ACVR1B and SMAD7. Identified in a complex composed of RYR1, PDE4D, PKA, FKBP1A and protein phosphatase 1 (PP1). Interacts directly with RYR2 and RYR3. Interacts with GLMN; rapamycin and FK506 abolish the interaction with GLMN in a dose dependent manner. Interacts directly with RYR1.

Its subcellular location is the cytoplasm. The protein localises to the cytosol. It is found in the sarcoplasmic reticulum membrane. It carries out the reaction [protein]-peptidylproline (omega=180) = [protein]-peptidylproline (omega=0). Inhibited by both FK506 and rapamycin. Its function is as follows. Keeps in an inactive conformation TGFBR1, the TGF-beta type I serine/threonine kinase receptor, preventing TGF-beta receptor activation in absence of ligand. May modulate the RYR1 calcium channel activity. PPIases accelerate the folding of proteins. It catalyzes the cis-trans isomerization of proline imidic peptide bonds in oligopeptides. This Bos taurus (Bovine) protein is Peptidyl-prolyl cis-trans isomerase FKBP1A (FKBP1A).